Consider the following 134-residue polypeptide: Lymphocyte antigen 6S (134 aa).

A signal peptide spans 1-26 (MSSLQAMKTLSLVLLVALLSMERAQG). In terms of domain architecture, UPAR/Ly6 spans 28–76 (RCYRCLAVLEGASCSVVSCPFLDGVCVSQKVSVFGSKVRGENKLSLLSC). 4 cysteine pairs are disulfide-bonded: cysteine 29-cysteine 53, cysteine 32-cysteine 41, cysteine 76-cysteine 98, and cysteine 99-cysteine 104. Residue asparagine 105 is the site of GPI-anchor amidated asparagine attachment. A propeptide spans 106-134 (AVVLAASSPWALCVQLLLSLGSVFLWALL) (removed in mature form).

The protein localises to the cell membrane. This Homo sapiens (Human) protein is Lymphocyte antigen 6S.